Reading from the N-terminus, the 445-residue chain is Fasciclin-like arabinogalactan protein 16 (445 aa).

Positions 1 to 23 (MDSSYGATKFLLLLFLTTSIATA) are cleaved as a signal peptide. 2 consecutive FAS1 domains span residues 35-173 (NSNS…ERLL) and 257-400 (VKDF…DGVL). Asparagine 72 and asparagine 279 each carry an N-linked (GlcNAc...) asparagine glycan.

Belongs to the fasciclin-like AGP family.

It is found in the secreted. In terms of biological role, may be a cell surface adhesion protein. The sequence is that of Fasciclin-like arabinogalactan protein 16 (FLA16) from Arabidopsis thaliana (Mouse-ear cress).